Here is a 239-residue protein sequence, read N- to C-terminus: Phosducin-like protein 3 (239 aa).

Residues K16 to L37 are disordered. One can recognise a Phosducin domain in the interval E28–A201. S41 is modified (phosphoserine). Positions F89–D239 are thioredoxin fold. A compositionally biased stretch (polar residues) spans Q217–N227. The segment at Q217 to D239 is disordered.

This sequence belongs to the phosducin family. In terms of assembly, interacts (via thioredoxin fold region) with kdr/vegfr2 (via juxtamembrane domain). As to expression, expressed in endothelial cells.

It is found in the cytoplasm. The protein resides in the perinuclear region. It localises to the endoplasmic reticulum. Its function is as follows. Acts as a chaperone for the angiogenic VEGF receptor KDR/VEGFR2, increasing its abundance by inhibiting its ubiquitination and degradation. Inhibits the folding activity of the chaperonin-containing T-complex (CCT) which leads to inhibition of cytoskeletal actin folding. Acts as a chaperone during heat shock alongside HSP90 and HSP40/70 chaperone complexes. Modulates the activation of caspases during apoptosis. This chain is Phosducin-like protein 3, found in Danio rerio (Zebrafish).